The primary structure comprises 298 residues: Acetylglutamate kinase (298 aa).

Substrate-binding positions include 69–70 (GG), arginine 91, and asparagine 196.

The protein belongs to the acetylglutamate kinase family. ArgB subfamily.

The protein localises to the cytoplasm. It carries out the reaction N-acetyl-L-glutamate + ATP = N-acetyl-L-glutamyl 5-phosphate + ADP. It participates in amino-acid biosynthesis; L-arginine biosynthesis; N(2)-acetyl-L-ornithine from L-glutamate: step 2/4. Catalyzes the ATP-dependent phosphorylation of N-acetyl-L-glutamate. The sequence is that of Acetylglutamate kinase from Rhodopseudomonas palustris (strain ATCC BAA-98 / CGA009).